Consider the following 562-residue polypeptide: Carboxylesterase 1E (562 aa).

A signal peptide spans 1 to 19; it reads MCLSALILVSLAAFTAGAG. An N-linked (GlcNAc...) asparagine glycan is attached at asparagine 80. Cysteine 88 and cysteine 117 form a disulfide bridge. The Acyl-ester intermediate role is filled by serine 222. A disulfide bridge connects residues cysteine 274 and cysteine 285. Asparagine 276 is a glycosylation site (N-linked (GlcNAc...) asparagine). Residues glutamate 354 and histidine 467 each act as charge relay system in the active site. Residue asparagine 490 is glycosylated (N-linked (GlcNAc...) asparagine). The Prevents secretion from ER motif lies at 559 to 562; it reads HTEL.

This sequence belongs to the type-B carboxylesterase/lipase family.

It localises to the endoplasmic reticulum lumen. The protein resides in the microsome membrane. It carries out the reaction a carboxylic ester + H2O = an alcohol + a carboxylate + H(+). The catalysed reaction is all-trans-retinyl hexadecanoate + H2O = all-trans-retinol + hexadecanoate + H(+). Functionally, involved in the detoxification of xenobiotics and in the activation of ester and amide prodrugs. Hydrolyzes retinyl esters. The polypeptide is Carboxylesterase 1E (Mus musculus (Mouse)).